A 303-amino-acid polypeptide reads, in one-letter code: Cell wall mannoprotein HSP150 (303 aa).

Positions 1–18 are cleaved as a signal peptide; it reads MQYKKTLVASALAATTLA. A propeptide spanning residues 19 to 72 is cleaved from the precursor; the sequence is AYAPSEPWSTLTPTATYSGGVTDYASTFGIAVQPISTTSSASSAATTASSKAKR. PIR1/2/3 repeat units lie at residues 71–89 and 97–113; these read KRAA…TTTA and AAAV…ATTK. The stretch at 114–134 is one PIR1/2/3 3; degenerate repeat; that stretch reads TTAAASLKLVMVKIQATTKTT. 3 PIR1/2/3 repeats span residues 135–153, 154–171, and 172–190; these read AAAV…TKTT, AAAV…TTKT, and TQAA…SATS.

Belongs to the PIR protein family. Covalently linked to beta-1,3-glucan of the inner cell wall layer via an alkali-sensitive ester linkage between the gamma-carboxyl group of glutamic acids, arising from specific glutamines within the PIR1/2/3 repeats, and hydroxyl groups of glucoses of beta-1,3-glucan chains. Post-translationally, the propeptide is cleaved off in the late Golgi. While both peptides are secreted, only a fraction of the mature glycoprotein is incorporated into the cell wall. In terms of processing, O-glycosylated. Extensively O-mannosylated.

Its subcellular location is the secreted. It localises to the cell wall. Functionally, component of the outer cell wall layer. Required for stability of the cell wall and for optimal growth. Required for resistance against several antifungal and cell wall-perturbing agents and for tolerance to heat shock. The polypeptide is Cell wall mannoprotein HSP150 (HSP150) (Saccharomyces cerevisiae (strain AWRI1631) (Baker's yeast)).